Here is a 352-residue protein sequence, read N- to C-terminus: Outer membrane protein assembly factor BamC (352 aa).

An N-terminal signal peptide occupies residues M1–G19. The N-palmitoyl cysteine moiety is linked to residue C20. A lipid anchor (S-diacylglycerol cysteine) is attached at C20.

It belongs to the BamC family. Part of the Bam complex.

It localises to the cell outer membrane. Its function is as follows. Part of the outer membrane protein assembly complex, which is involved in assembly and insertion of beta-barrel proteins into the outer membrane. The polypeptide is Outer membrane protein assembly factor BamC (Pseudoalteromonas sp. (strain SM9913)).